A 95-amino-acid chain; its full sequence is Aspartyl/glutamyl-tRNA(Asn/Gln) amidotransferase subunit C (95 aa).

Belongs to the GatC family. As to quaternary structure, heterotrimer of A, B and C subunits.

The enzyme catalyses L-glutamyl-tRNA(Gln) + L-glutamine + ATP + H2O = L-glutaminyl-tRNA(Gln) + L-glutamate + ADP + phosphate + H(+). The catalysed reaction is L-aspartyl-tRNA(Asn) + L-glutamine + ATP + H2O = L-asparaginyl-tRNA(Asn) + L-glutamate + ADP + phosphate + 2 H(+). In terms of biological role, allows the formation of correctly charged Asn-tRNA(Asn) or Gln-tRNA(Gln) through the transamidation of misacylated Asp-tRNA(Asn) or Glu-tRNA(Gln) in organisms which lack either or both of asparaginyl-tRNA or glutaminyl-tRNA synthetases. The reaction takes place in the presence of glutamine and ATP through an activated phospho-Asp-tRNA(Asn) or phospho-Glu-tRNA(Gln). The chain is Aspartyl/glutamyl-tRNA(Asn/Gln) amidotransferase subunit C from Xanthobacter autotrophicus (strain ATCC BAA-1158 / Py2).